A 20-amino-acid chain; its full sequence is Pregnancy-associated glycoprotein 60H (20 aa).

N-linked (GlcNAc...) asparagine glycosylation occurs at N4.

It belongs to the peptidase A1 family. As to expression, chorionic epithelium (trophectoderm) and placental cotyledons.

The protein localises to the secreted. It localises to the extracellular space. In Bison bonasus (European bison), this protein is Pregnancy-associated glycoprotein 60H.